A 538-amino-acid chain; its full sequence is Chaperonin GroEL (538 aa).

ATP is bound by residues 29–32 (TIGP), 86–90 (DGTTT), Gly-413, 476–478 (NAA), and Asp-492.

This sequence belongs to the chaperonin (HSP60) family. As to quaternary structure, forms a cylinder of 14 subunits composed of two heptameric rings stacked back-to-back. Interacts with the co-chaperonin GroES.

It localises to the cytoplasm. The enzyme catalyses ATP + H2O + a folded polypeptide = ADP + phosphate + an unfolded polypeptide.. In terms of biological role, together with its co-chaperonin GroES, plays an essential role in assisting protein folding. The GroEL-GroES system forms a nano-cage that allows encapsulation of the non-native substrate proteins and provides a physical environment optimized to promote and accelerate protein folding. The polypeptide is Chaperonin GroEL (Staphylococcus aureus (strain MRSA252)).